The sequence spans 392 residues: Phosphoglycerate kinase (392 aa).

Residues 21 to 23 (DMN), arginine 36, 59 to 62 (HLGR), arginine 114, and arginine 147 each bind substrate. ATP is bound by residues lysine 198, glutamate 320, and 346-349 (GGDT).

This sequence belongs to the phosphoglycerate kinase family. As to quaternary structure, monomer.

The protein resides in the cytoplasm. The catalysed reaction is (2R)-3-phosphoglycerate + ATP = (2R)-3-phospho-glyceroyl phosphate + ADP. Its pathway is carbohydrate degradation; glycolysis; pyruvate from D-glyceraldehyde 3-phosphate: step 2/5. The chain is Phosphoglycerate kinase from Neisseria meningitidis serogroup A / serotype 4A (strain DSM 15465 / Z2491).